A 402-amino-acid chain; its full sequence is N-acetyltransferase Eis (402 aa).

The region spanning 3-154 is the N-acetyltransferase domain; the sequence is VTLCSPTEDD…RFARFHADAP (152 aa). Residues 85–87, 93–98, and 121–122 contribute to the acetyl-CoA site; these read VAV, RRGLLR, and SE. Residue Y126 is the Proton donor of the active site. F402 (proton acceptor; via carboxylate) is an active-site residue.

The protein belongs to the acetyltransferase Eis family. In terms of assembly, homohexamer; trimer of dimers.

The protein localises to the secreted. It localises to the host cytoplasmic vesicle. It is found in the host phagosome. Its subcellular location is the extracellular vesicle. The protein resides in the bacterial extracellular vesicle. The protein localises to the host extracellular space. The catalysed reaction is L-lysyl-[protein] + acetyl-CoA = N(6)-acetyl-L-lysyl-[protein] + CoA + H(+). Functionally, effector that is released into the host cell and affects host immune responses. Acts as an acetyltransferase that acetylates lysine residues of host proteins. The chain is N-acetyltransferase Eis from Mycobacterium bovis (strain ATCC BAA-935 / AF2122/97).